The following is a 434-amino-acid chain: Enolase (434 aa).

Gln-163 is a binding site for (2R)-2-phosphoglycerate. Catalysis depends on Glu-205, which acts as the Proton donor. Mg(2+)-binding residues include Asp-242, Glu-291, and Asp-318. Residues Lys-343, Arg-372, Ser-373, and Lys-394 each contribute to the (2R)-2-phosphoglycerate site. The active-site Proton acceptor is the Lys-343.

Belongs to the enolase family. It depends on Mg(2+) as a cofactor.

The protein resides in the cytoplasm. Its subcellular location is the secreted. It localises to the cell surface. It is found in the cell wall. It carries out the reaction (2R)-2-phosphoglycerate = phosphoenolpyruvate + H2O. The protein operates within carbohydrate degradation; glycolysis; pyruvate from D-glyceraldehyde 3-phosphate: step 4/5. Functionally, catalyzes the reversible conversion of 2-phosphoglycerate (2-PG) into phosphoenolpyruvate (PEP). It is essential for the degradation of carbohydrates via glycolysis. This Streptococcus pneumoniae serotype 2 (strain D39 / NCTC 7466) protein is Enolase.